A 475-amino-acid chain; its full sequence is UDP-N-acetylmuramate--L-alanine ligase (475 aa).

G112 to T118 is an ATP binding site.

This sequence belongs to the MurCDEF family.

The protein resides in the cytoplasm. It catalyses the reaction UDP-N-acetyl-alpha-D-muramate + L-alanine + ATP = UDP-N-acetyl-alpha-D-muramoyl-L-alanine + ADP + phosphate + H(+). It functions in the pathway cell wall biogenesis; peptidoglycan biosynthesis. Cell wall formation. This chain is UDP-N-acetylmuramate--L-alanine ligase, found in Paracidovorax citrulli (strain AAC00-1) (Acidovorax citrulli).